We begin with the raw amino-acid sequence, 533 residues long: CTP synthase (533 aa).

The segment at 1 to 264 is amidoligase domain; that stretch reads MKYIFVTGGV…GKLVTEKLNL (264 aa). S12 provides a ligand contact to CTP. S12 is a UTP binding site. ATP is bound by residues 13–18 and D70; that span reads SLGKGI. D70 and E138 together coordinate Mg(2+). Residues 145 to 147, 185 to 190, and K221 contribute to the CTP site; these read DIE and KTKPTQ. Residues 185 to 190 and K221 each bind UTP; that span reads KTKPTQ. Residue 237 to 239 participates in ATP binding; sequence KDA. The region spanning 289-533 is the Glutamine amidotransferase type-1 domain; it reads TIGIVGKYIE…HGLVKASIEK (245 aa). Residue G357 participates in L-glutamine binding. Residue C384 is the Nucleophile; for glutamine hydrolysis of the active site. L-glutamine is bound by residues 385 to 388, E407, and R464; that span reads LGMQ. Active-site residues include H509 and E511.

It belongs to the CTP synthase family. In terms of assembly, homotetramer.

The enzyme catalyses UTP + L-glutamine + ATP + H2O = CTP + L-glutamate + ADP + phosphate + 2 H(+). The catalysed reaction is L-glutamine + H2O = L-glutamate + NH4(+). It catalyses the reaction UTP + NH4(+) + ATP = CTP + ADP + phosphate + 2 H(+). It functions in the pathway pyrimidine metabolism; CTP biosynthesis via de novo pathway; CTP from UDP: step 2/2. With respect to regulation, allosterically activated by GTP, when glutamine is the substrate; GTP has no effect on the reaction when ammonia is the substrate. The allosteric effector GTP functions by stabilizing the protein conformation that binds the tetrahedral intermediate(s) formed during glutamine hydrolysis. Inhibited by the product CTP, via allosteric rather than competitive inhibition. Catalyzes the ATP-dependent amination of UTP to CTP with either L-glutamine or ammonia as the source of nitrogen. Regulates intracellular CTP levels through interactions with the four ribonucleotide triphosphates. This Methanococcus maripaludis (strain DSM 14266 / JCM 13030 / NBRC 101832 / S2 / LL) protein is CTP synthase.